We begin with the raw amino-acid sequence, 448 residues long: Protein TraN (448 aa).

Disordered regions lie at residues 243 to 273 (NRVGASRTATTARAGQQQSPAVKQSSGNSGE) and 411 to 448 (EAARRHQALMRKQEQEKKQAQERERGRSQSLGLSNKPS). The segment covering 246–261 (GASRTATTARAGQQQS) has biased composition (low complexity). A compositionally biased stretch (polar residues) spans 262–271 (PAVKQSSGNS). Residues 421 to 437 (RKQEQEKKQAQERERGR) are compositionally biased toward basic and acidic residues. Polar residues predominate over residues 438 to 448 (SQSLGLSNKPS).

The protein to H.influenzae HI_1407.

The protein is Protein TraN (traN) of Escherichia coli.